The primary structure comprises 143 residues: Transcriptional regulator MraZ (143 aa).

2 consecutive SpoVT-AbrB domains span residues 5–47 (TYTP…PKEE) and 76–119 (ADEQ…DAQA).

This sequence belongs to the MraZ family. Forms oligomers.

Its subcellular location is the cytoplasm. It is found in the nucleoid. This is Transcriptional regulator MraZ from Corynebacterium glutamicum (strain R).